The sequence spans 259 residues: Phosphatidylglycerol--prolipoprotein diacylglyceryl transferase (259 aa).

4 consecutive transmembrane segments (helical) span residues 12–32 (LAIHWYALCILSGLVLAVYLA), 41–61 (ISSDAIFDFILIAFPLAIVGA), 80–100 (IIAIWNGGIAIYGGLITGALV), and 109–129 (VLNPIHFLDIAAPSVMAAQAI). An a 1,2-diacyl-sn-glycero-3-phospho-(1'-sn-glycerol)-binding site is contributed by R131. 3 helical membrane passes run 167–187 (IPTFLYESFWNLLGFVIIMMW), 194–214 (LLDGEIFAFYLIWYGSGRLVI), and 226–246 (GIRISQYVSALLIIIGLIFVI).

This sequence belongs to the Lgt family.

Its subcellular location is the cell membrane. The catalysed reaction is L-cysteinyl-[prolipoprotein] + a 1,2-diacyl-sn-glycero-3-phospho-(1'-sn-glycerol) = an S-1,2-diacyl-sn-glyceryl-L-cysteinyl-[prolipoprotein] + sn-glycerol 1-phosphate + H(+). It participates in protein modification; lipoprotein biosynthesis (diacylglyceryl transfer). Its function is as follows. Catalyzes the transfer of the diacylglyceryl group from phosphatidylglycerol to the sulfhydryl group of the N-terminal cysteine of a prolipoprotein, the first step in the formation of mature lipoproteins. The sequence is that of Phosphatidylglycerol--prolipoprotein diacylglyceryl transferase from Streptococcus pyogenes serotype M3 (strain ATCC BAA-595 / MGAS315).